The chain runs to 582 residues: Protein alan shepard (582 aa).

Residues 1-12 (MHPRYSPAPPPQ) are compositionally biased toward pro residues. A disordered region spans residues 1 to 73 (MHPRYSPAPP…AAPPTSRSAF (73 aa)). Position 5 is a phosphotyrosine (tyrosine 5). Over residues 13–24 (QQQQMGGPLHQQ) the composition is skewed to low complexity. Residues 25 to 36 (QGGGGGGGGGIR) show a composition bias toward gly residues. Residues 39 to 57 (SNAQQLPPQIPRSQNYSNG) show a composition bias toward polar residues. The span at 58 to 72 (SSSSAAAAPPTSRSA) shows a compositional bias: low complexity. Phosphotyrosine is present on residues tyrosine 125 and tyrosine 142. The tract at residues 164–225 (PATTTYGQRV…TVQNQNQQGG (62 aa)) is disordered. Residues 178–225 (SPSNTNSSSSSNTGSQSGTLSTSLSNTTNTNTNMGPNGTVQNQNQQGG) show a composition bias toward low complexity. RRM domains follow at residues 231–304 (TNLY…MAKQ) and 310–389 (TNLY…FADG). The interval 555-582 (PMTDSEQASTAASPDEAYTQYPHQAAPK) is disordered.

Functionally, has a role in the perception of gravity. This chain is Protein alan shepard, found in Drosophila yakuba (Fruit fly).